The primary structure comprises 570 residues: La-related protein 7 (570 aa).

Residue Met-1 is modified to N-acetylmethionine. Residues 1 to 16 (METENQKTMEESTKRK) are compositionally biased toward basic and acidic residues. Disordered stretches follow at residues 1 to 24 (METE…KRSR) and 180 to 364 (LNNP…ERHK). An HTH La-type RNA-binding domain is found at 22–116 (RSRVKQVLAD…KPLGERPKDE (95 aa)). The 79-residue stretch at 119-197 (RTVYVELLPK…PRKPGIFPKT (79 aa)) folds into the RRM domain. Over residues 213–222 (KKKKKKKGRI) the composition is skewed to basic residues. Lys-231 is covalently cross-linked (Glycyl lysine isopeptide (Lys-Gly) (interchain with G-Cter in SUMO2)). Phosphothreonine is present on Thr-251. Phosphoserine is present on residues Ser-253 and Ser-256. Position 260 is a phosphothreonine (Thr-260). Over residues 286 to 295 (RAGKRERCSA) the composition is skewed to basic and acidic residues. A phosphoserine mark is found at Ser-294 and Ser-334. Position 335 is a phosphothreonine (Thr-335). The span at 340 to 349 (ETDRKGDSLS) shows a compositional bias: basic and acidic residues. A Phosphoserine modification is found at Ser-347. Positions 350–363 (KVKRKHKKKHKERH) are enriched in basic residues. Lys-406 participates in a covalent cross-link: Glycyl lysine isopeptide (Lys-Gly) (interchain with G-Cter in SUMO2). The xRRM domain occupies 438-551 (QFVTGVIVKI…TEKLITKAEK (114 aa)).

This sequence belongs to the LARP7 family. In terms of assembly, core component of the 7SK RNP complex, at least composed of 7SK RNA, LARP7, MEPCE, HEXIM1 (or HEXIM2) and P-TEFb (composed of CDK9 and CCNT1/cyclin-T1). Interacts with METTL16. Interacts with RBM7; upon genotoxic stress this interaction is enhanced, triggering the release of inactive P-TEFb complex from the core, yielding to P-TEFb complex activation. Associates with box C/D small nucleolar ribonucleoprotein (snoRNP) complexes.

It localises to the nucleus. It is found in the nucleoplasm. Its function is as follows. RNA-binding protein that specifically binds distinct small nuclear RNA (snRNAs) and regulates their processing and function. Specifically binds the 7SK snRNA (7SK RNA) and acts as a core component of the 7SK ribonucleoprotein (RNP) complex, thereby acting as a negative regulator of transcription elongation by RNA polymerase II. The 7SK RNP complex sequesters the positive transcription elongation factor b (P-TEFb) in a large inactive 7SK RNP complex preventing RNA polymerase II phosphorylation and subsequent transcriptional elongation. The 7SK RNP complex also promotes snRNA gene transcription by RNA polymerase II via interaction with the little elongation complex (LEC). LARP7 specifically binds to the highly conserved 3'-terminal U-rich stretch of 7SK RNA; on stimulation, remains associated with 7SK RNA, whereas P-TEFb is released from the complex. LARP7 also acts as a regulator of mRNA splicing fidelity by promoting U6 snRNA processing. Specifically binds U6 snRNAs and associates with a subset of box C/D RNP complexes: promotes U6 snRNA 2'-O-methylation by facilitating U6 snRNA loading into box C/D RNP complexes. U6 snRNA 2'-O-methylation is required for mRNA splicing fidelity. Binds U6 snRNAs with a 5'-CAGGG-3' sequence motif. U6 snRNA processing is required for spermatogenesis. This is La-related protein 7 from Mus musculus (Mouse).